The following is a 71-amino-acid chain: Lantibiotic Flvbeta.c (71 aa).

Positions 1 to 33 (MENKFDMEKFKKLAAVVSEDELDTLLDETTVGA) are cleaved as a propeptide — cleaved by FlvT. A cross-link (lanthionine (Ser-Cys); by FlvM2) is located at residues 35-39 (SSNDC). Ser36 is subject to 2,3-didehydroalanine (Ser); by FlvM2. Cross-links (beta-methyllanthionine (Thr-Cys); by FlvM2) lie at residues 54 to 60 (TSKFDWC), 62 to 65 (TGAC), and 66 to 69 (TTSC).

In terms of processing, contains LL-lanthionine and DL-beta-methyllanthionine, when coepressed in E.coli with the flavecin synthetase FlvM2.

It is found in the secreted. Lanthionine-containing peptide antibiotic (lantibiotic) that is probably active on Gram-positive bacteria, since its analog [Del1]Flvbeta.c shows antibacterial activity against M.luteus. This activity is not synergistically enhanced by [Del2]Flvalpha.a, an analog of Flvalpha.a, which is encoded by the same operon than Flvbeta.c. The bactericidal activity of lantibiotics is based on depolarization of energized bacterial cytoplasmic membranes, initiated by the formation of aqueous transmembrane pores. This is Lantibiotic Flvbeta.c from Ruminococcus flavefaciens.